Here is a 202-residue protein sequence, read N- to C-terminus: Urease accessory protein UreE (202 aa).

A compositionally biased stretch (basic and acidic residues) spans 171-188; sequence HHGHSHSHDHDHDHDHQH. The disordered stretch occupies residues 171 to 202; it reads HHGHSHSHDHDHDHDHQHGPGCTHGHRGHDHH.

It belongs to the UreE family.

Its subcellular location is the cytoplasm. Its function is as follows. Involved in urease metallocenter assembly. Binds nickel. Probably functions as a nickel donor during metallocenter assembly. The chain is Urease accessory protein UreE from Burkholderia ambifaria (strain ATCC BAA-244 / DSM 16087 / CCUG 44356 / LMG 19182 / AMMD) (Burkholderia cepacia (strain AMMD)).